Here is a 200-residue protein sequence, read N- to C-terminus: MTVMDNPPVTMEDFFETSRGLWLIRRVVHHLDSQDDEAADSNLVIEPFNASDEAVEKVCKVFGIEASEANGGARFWWESNLLAEKRNDDYAAIVIDVPKPEHPDQGYLLRDVGYVEKKPALSTYEFTPDGVLTIKTRYDTNFGIERCWFVNDQIRMRVSSVQFLNGAAMTTYCTEFRCPSKADIEQIANQAKTFAQTNPL.

Belongs to the CpcS/CpeS biliprotein lyase family.

In terms of biological role, covalently attaches a chromophore to Cys residue(s) of phycobiliproteins. The protein is Chromophore lyase CpcS/CpeS of Synechococcus sp. (strain WH8020).